The chain runs to 200 residues: UPF0316 protein SAUSA300_1892 (200 aa).

3 helical membrane-spanning segments follow: residues 8 to 28 (PWLM…FLTM), 40 to 60 (IAAS…GLVM), and 66 to 86 (IQNI…GMKI).

This sequence belongs to the UPF0316 family.

The protein resides in the cell membrane. The chain is UPF0316 protein SAUSA300_1892 from Staphylococcus aureus (strain USA300).